A 464-amino-acid chain; its full sequence is Argininosuccinate lyase (464 aa).

It belongs to the lyase 1 family. Argininosuccinate lyase subfamily.

The protein localises to the cytoplasm. It carries out the reaction 2-(N(omega)-L-arginino)succinate = fumarate + L-arginine. Its pathway is amino-acid biosynthesis; L-arginine biosynthesis; L-arginine from L-ornithine and carbamoyl phosphate: step 3/3. The protein is Argininosuccinate lyase of Pseudomonas aeruginosa (strain UCBPP-PA14).